Here is a 38-residue protein sequence, read N- to C-terminus: MIEPLLLGIVLGLIPVTLAGLFVAAYLQYKRGNDLGME.

The chain crosses the membrane as a helical span at residues 5–25 (LLLGIVLGLIPVTLAGLFVAA).

Belongs to the PetG family. As to quaternary structure, the 4 large subunits of the cytochrome b6-f complex are cytochrome b6, subunit IV (17 kDa polypeptide, PetD), cytochrome f and the Rieske protein, while the 4 small subunits are PetG, PetL, PetM and PetN. The complex functions as a dimer.

It is found in the cellular thylakoid membrane. Its function is as follows. Component of the cytochrome b6-f complex, which mediates electron transfer between photosystem II (PSII) and photosystem I (PSI), cyclic electron flow around PSI, and state transitions. PetG is required for either the stability or assembly of the cytochrome b6-f complex. The chain is Cytochrome b6-f complex subunit 5 from Picosynechococcus sp. (strain ATCC 27264 / PCC 7002 / PR-6) (Agmenellum quadruplicatum).